A 368-amino-acid polypeptide reads, in one-letter code: Protein-glutamate methylesterase/protein-glutamine glutaminase (368 aa).

One can recognise a Response regulatory domain in the interval 9–126 (KVLVVDDSAF…SINMKELKDE (118 aa)). 4-aspartylphosphate is present on Asp60. The 194-residue stretch at 161-354 (SVPARIAVAI…ETVVKAVEII (194 aa)) folds into the CheB-type methylesterase domain. Active-site residues include Ser173, His200, and Asp296.

The protein belongs to the CheB family. Post-translationally, phosphorylated by CheA. Phosphorylation of the N-terminal regulatory domain activates the methylesterase activity.

The protein localises to the cytoplasm. It carries out the reaction [protein]-L-glutamate 5-O-methyl ester + H2O = L-glutamyl-[protein] + methanol + H(+). The enzyme catalyses L-glutaminyl-[protein] + H2O = L-glutamyl-[protein] + NH4(+). Involved in chemotaxis. Part of a chemotaxis signal transduction system that modulates chemotaxis in response to various stimuli. Catalyzes the demethylation of specific methylglutamate residues introduced into the chemoreceptors (methyl-accepting chemotaxis proteins or MCP) by CheR. Also mediates the irreversible deamidation of specific glutamine residues to glutamic acid. The protein is Protein-glutamate methylesterase/protein-glutamine glutaminase of Pyrococcus horikoshii (strain ATCC 700860 / DSM 12428 / JCM 9974 / NBRC 100139 / OT-3).